A 92-amino-acid polypeptide reads, in one-letter code: uncharacterized protein (92 aa).

This is an uncharacterized protein from Schizosaccharomyces pombe (strain 972 / ATCC 24843) (Fission yeast).